The following is a 1345-amino-acid chain: Rho guanine nucleotide exchange factor 10 (1345 aa).

Disordered stretches follow at residues 1 to 84 and 99 to 120; these read MEQG…PAKL and TPLQEDQPSSPDANTEEEGVGL. Residues 22 to 39 are compositionally biased toward acidic residues; it reads NNEEEGELFDFDSGDEVP. Basic and acidic residues predominate over residues 40–54; the sequence is EADRQVPSADDRTRG. Over residues 102–111 the composition is skewed to polar residues; the sequence is QEDQPSSPDA. Ser-157 is subject to Phosphoserine. 2 disordered regions span residues 158–195 and 207–273; these read VEEEEAAETVGDGQCNSLSSEDLPHSSEQGSQEGSALA and MENP…IPRS. Over residues 171–191 the composition is skewed to polar residues; sequence QCNSLSSEDLPHSSEQGSQEG. Residues 224–239 are compositionally biased toward acidic residues; sequence DSEPDEMIYDDVENGE. A compositionally biased stretch (low complexity) spans 242–255; it reads GNSSPEYGWSSSEF. Residues 307-335 are a coiled coil; the sequence is GAMEIQQAKQRQERKMQKLMKAAKEGTKD. Ser-355 is modified (phosphoserine). The DH domain occupies 397–584; sequence VRRYILGSIV…ETLAEKLNER (188 aa). Disordered stretches follow at residues 1202 to 1237 and 1253 to 1306; these read DRARDSPRSGSELQDEDPKDLLCSEEGPSCPGQPDT and KNDL…RASS. Over residues 1256 to 1271 the composition is skewed to low complexity; it reads LSSSSGSLNLSHGSSS. Phosphoserine is present on Ser-1262. At Gln-1314 the chain carries N5-methylglutamine.

Methylated at Gln-1314 by N6AMT1. As to expression, ubiquitously expressed.

Its function is as follows. May play a role in developmental myelination of peripheral nerves. In Mus musculus (Mouse), this protein is Rho guanine nucleotide exchange factor 10 (Arhgef10).